The following is a 211-amino-acid chain: MGGKWSKCSMKGWPTIRERMKRAELQPPEPAAEGVGAASRDLEKHGAITSSNTAATNADCAWLEAQEDEEVGFPVRPQVPLRPMTYKGALDLSHFLKEKGGLEGLIYSQKRQDILDLWVYHTQGYFPDWQNYTPGPGIRYPLCFGWCFKLVPMDPDQVEEANEGENNSLLHPISLHGMDDPEKEVLVWKFDSRLAFRHMAREVHPEYYKDC.

The N-myristoyl glycine; by host moiety is linked to residue G2. S6 carries the post-translational modification Phosphoserine; by host. The tract at residues 67–70 (EDEE) is acidic; interacts with host PACS1 and PACS2; stabilizes the interaction of NEF/MHC-I with host AP1M1; necessary for MHC-I internalization. Positions 74–83 (PVRPQVPLRP) are SH3-binding; interaction with Src family tyrosine kinases. Residues 77–80 (PQVP) carry the PxxP; stabilizes the interaction of NEF/MHC-I with host AP1M1; necessary for MHC-I internalization motif. Residues 113-129 (DILDLWVYHTQGYFPDW) form a mediates dimerization, Nef-PTE1 interaction region. The interval 153 to 185 (MDPDQVEEANEGENNSLLHPISLHGMDDPEKEV) is binding to ATP6V1H. A Dileucine internalization motif; necessary for CD4 internalization motif is present at residues 169–170 (LL). Positions 179-180 (DD) match the Diacidic; necessary for CD4 internalization motif.

Belongs to the lentivirus primate group Nef protein family. In terms of assembly, monomer; cytosolic form. Homodimer; membrane bound form. Interacts with Nef associated p21-activated kinase (PAK2); this interaction activates PAK2. Associates with the Nef-MHC-I-AP1 complex; this complex is required for MHC-I internalization. Interacts (via C-terminus) with host PI3-kinase. Interacts with host PACS1; this interaction seems to be weak. Interacts with host PACS2. Interacts with host LCK and MAPK3; these interactions inhibit the kinase activity of the latter. Interacts with host ATP6V1H; this interaction may play a role in CD4 endocytosis. Associates with the CD4-Nef-AP2 complex; this complex is required for CD4 internalization. Interacts with host AP2 subunit alpha and AP2 subunit sigma2. Interacts with TCR-zeta chain; this interaction up-regulates the Fas ligand (FasL) surface expression. Interacts with host HCK, LYN, and SRC; these interactions activate the Src family kinases. Interacts with MAP3K5; this interaction inhibits the Fas and TNFR-mediated death signals. Interacts with beta-COP and PTE1. Interacts with human RACK1; this increases Nef phosphorylation by PKC. Interacts with TP53; this interaction decreases the half-life of TP53, protecting the infected cell against p53-mediated apoptosis. Post-translationally, the virion-associated Nef proteins are cleaved by the viral protease to release the soluble C-terminal core protein. Nef is probably cleaved concomitantly with viral structural proteins on maturation of virus particles. Myristoylated. In terms of processing, phosphorylated on serine residues, probably by host PKCdelta and theta.

The protein resides in the host cell membrane. Its subcellular location is the virion. The protein localises to the secreted. It is found in the host Golgi apparatus membrane. Functionally, factor of infectivity and pathogenicity, required for optimal virus replication. Alters numerous pathways of T-lymphocyte function and down-regulates immunity surface molecules in order to evade host defense and increase viral infectivity. Alters the functionality of other immunity cells, like dendritic cells, monocytes/macrophages and NK cells. In terms of biological role, in infected CD4(+) T-lymphocytes, down-regulates the surface MHC-I, mature MHC-II, CD4, CD28, CCR5 and CXCR4 molecules. Mediates internalization and degradation of host CD4 through the interaction of with the cytoplasmic tail of CD4, the recruitment of AP-2 (clathrin adapter protein complex 2), internalization through clathrin coated pits, and subsequent transport to endosomes and lysosomes for degradation. Diverts host MHC-I molecules to the trans-Golgi network-associated endosomal compartments by an endocytic pathway to finally target them for degradation. MHC-I down-regulation may involve AP-1 (clathrin adapter protein complex 1) or possibly Src family kinase-ZAP70/Syk-PI3K cascade recruited by PACS2. In consequence infected cells are masked for immune recognition by cytotoxic T-lymphocytes. Decreasing the number of immune receptors also prevents reinfection by more HIV particles (superinfection). Down-regulates host SERINC3 and SERINC5 thereby excluding these proteins from the viral particles. Virion infectivity is drastically higher when SERINC3 or SERINC5 are excluded from the viral envelope, because these host antiviral proteins impair the membrane fusion event necessary for subsequent virion penetration. Bypasses host T-cell signaling by inducing a transcriptional program nearly identical to that of anti-CD3 cell activation. Interaction with TCR-zeta chain up-regulates the Fas ligand (FasL). Increasing surface FasL molecules and decreasing surface MHC-I molecules on infected CD4(+) cells send attacking cytotoxic CD8+ T-lymphocytes into apoptosis. Its function is as follows. Plays a role in optimizing the host cell environment for viral replication without causing cell death by apoptosis. Protects the infected cells from apoptosis in order to keep them alive until the next virus generation is ready to strike. Inhibits the Fas and TNFR-mediated death signals by blocking MAP3K5/ASK1. Decreases the half-life of TP53, protecting the infected cell against p53-mediated apoptosis. Inhibits the apoptotic signals regulated by the Bcl-2 family proteins through the formation of a Nef/PI3-kinase/PAK2 complex that leads to activation of PAK2 and induces phosphorylation of host BAD. Functionally, extracellular Nef protein targets CD4(+) T-lymphocytes for apoptosis by interacting with CXCR4 surface receptors. In Homo sapiens (Human), this protein is Protein Nef.